Consider the following 431-residue polypeptide: Enolase (431 aa).

Glutamine 167 lines the (2R)-2-phosphoglycerate pocket. The active-site Proton donor is glutamate 209. Residues aspartate 246, glutamate 289, and aspartate 316 each contribute to the Mg(2+) site. 4 residues coordinate (2R)-2-phosphoglycerate: lysine 341, arginine 370, serine 371, and lysine 392. Catalysis depends on lysine 341, which acts as the Proton acceptor.

The protein belongs to the enolase family. Component of the RNA degradosome, a multiprotein complex involved in RNA processing and mRNA degradation. Mg(2+) is required as a cofactor.

Its subcellular location is the cytoplasm. It is found in the secreted. The protein resides in the cell surface. The catalysed reaction is (2R)-2-phosphoglycerate = phosphoenolpyruvate + H2O. The protein operates within carbohydrate degradation; glycolysis; pyruvate from D-glyceraldehyde 3-phosphate: step 4/5. Catalyzes the reversible conversion of 2-phosphoglycerate (2-PG) into phosphoenolpyruvate (PEP). It is essential for the degradation of carbohydrates via glycolysis. The chain is Enolase from Shewanella baltica (strain OS223).